Reading from the N-terminus, the 183-residue chain is Archaemetzincin (183 aa).

His-131 provides a ligand contact to Zn(2+). Glu-132 (proton acceptor) is an active-site residue. His-135, His-141, Cys-142, Cys-147, Cys-166, and Cys-169 together coordinate Zn(2+).

This sequence belongs to the peptidase M54 family. As to quaternary structure, monomer. Requires Zn(2+) as cofactor.

Probable zinc metalloprotease whose natural substrate is unknown. This Saccharolobus islandicus (strain Y.N.15.51 / Yellowstone #2) (Sulfolobus islandicus) protein is Archaemetzincin.